Reading from the N-terminus, the 552-residue chain is CTP synthase (552 aa).

Residues 1–270 (MTKYVFVTGG…DRIICEELKL (270 aa)) form an amidoligase domain region. Residue Ser-13 coordinates CTP. Residue Ser-13 participates in UTP binding. ATP is bound by residues 14–19 (SLGKGI) and Asp-71. Residues Asp-71 and Glu-144 each contribute to the Mg(2+) site. CTP is bound by residues 151 to 153 (DIE), 191 to 196 (KTKPTQ), and Lys-227. Residues 191 to 196 (KTKPTQ) and Lys-227 contribute to the UTP site. Residues 295–547 (TIGMVGKYVD…VEAALANKQA (253 aa)) form the Glutamine amidotransferase type-1 domain. Gly-356 lines the L-glutamine pocket. The active-site Nucleophile; for glutamine hydrolysis is Cys-383. L-glutamine contacts are provided by residues 384 to 387 (LGMQ), Glu-407, and Arg-473. Residues His-520 and Glu-522 contribute to the active site.

This sequence belongs to the CTP synthase family. As to quaternary structure, homotetramer.

It catalyses the reaction UTP + L-glutamine + ATP + H2O = CTP + L-glutamate + ADP + phosphate + 2 H(+). The enzyme catalyses L-glutamine + H2O = L-glutamate + NH4(+). It carries out the reaction UTP + NH4(+) + ATP = CTP + ADP + phosphate + 2 H(+). Its pathway is pyrimidine metabolism; CTP biosynthesis via de novo pathway; CTP from UDP: step 2/2. Its activity is regulated as follows. Allosterically activated by GTP, when glutamine is the substrate; GTP has no effect on the reaction when ammonia is the substrate. The allosteric effector GTP functions by stabilizing the protein conformation that binds the tetrahedral intermediate(s) formed during glutamine hydrolysis. Inhibited by the product CTP, via allosteric rather than competitive inhibition. Functionally, catalyzes the ATP-dependent amination of UTP to CTP with either L-glutamine or ammonia as the source of nitrogen. Regulates intracellular CTP levels through interactions with the four ribonucleotide triphosphates. The polypeptide is CTP synthase (Burkholderia cenocepacia (strain ATCC BAA-245 / DSM 16553 / LMG 16656 / NCTC 13227 / J2315 / CF5610) (Burkholderia cepacia (strain J2315))).